We begin with the raw amino-acid sequence, 63 residues long: MSGQQSQINAGGGNGQGGDTPEFDAGQVSINSAGTDDLLDEIDGLLESNAEEFVRSYVQKGGE.

The disordered stretch occupies residues 1–35 (MSGQQSQINAGGGNGQGGDTPEFDAGQVSINSAGT). The segment at 19–57 (DTPEFDAGQVSINSAGTDDLLDEIDGLLESNAEEFVRSY) is ARC ATPase binding. Residue E63 forms an Isoglutamyl lysine isopeptide (Glu-Lys) (interchain with K-? in acceptor proteins) linkage.

It belongs to the prokaryotic ubiquitin-like protein family. As to quaternary structure, strongly interacts with the proteasome-associated ATPase ARC through a hydrophobic interface; the interacting region of Pup lies in its C-terminal half. There is one Pup binding site per ARC hexamer ring.

The protein operates within protein degradation; proteasomal Pup-dependent pathway. In terms of biological role, protein modifier that is covalently attached to lysine residues of substrate proteins, thereby targeting them for proteasomal degradation. The tagging system is termed pupylation. The polypeptide is Prokaryotic ubiquitin-like protein Pup (Corynebacterium aurimucosum (strain ATCC 700975 / DSM 44827 / CIP 107346 / CN-1) (Corynebacterium nigricans)).